Here is a 468-residue protein sequence, read N- to C-terminus: Glutamate--tRNA ligase (468 aa).

The short motif at 10–20 (PSPTGYLHIGG) is the 'HIGH' region element. The 'KMSKS' region motif lies at 252 to 256 (KLSKR). Position 255 (Lys-255) interacts with ATP.

It belongs to the class-I aminoacyl-tRNA synthetase family. Glutamate--tRNA ligase type 1 subfamily. As to quaternary structure, monomer.

It is found in the cytoplasm. The catalysed reaction is tRNA(Glu) + L-glutamate + ATP = L-glutamyl-tRNA(Glu) + AMP + diphosphate. Functionally, catalyzes the attachment of glutamate to tRNA(Glu) in a two-step reaction: glutamate is first activated by ATP to form Glu-AMP and then transferred to the acceptor end of tRNA(Glu). The protein is Glutamate--tRNA ligase of Mycoplasmopsis pulmonis (strain UAB CTIP) (Mycoplasma pulmonis).